The sequence spans 592 residues: Tegument protein US23 (592 aa).

Residues 407-491 (PRSLGDGEEE…NNVVPNVERR (85 aa)) are disordered. Over residues 460 to 481 (ADDEEQGEDDDDSGAEPMEPEE) the composition is skewed to acidic residues.

It belongs to the herpesviridae US22 family.

The protein localises to the virion tegument. This is Tegument protein US23 (US23) from Homo sapiens (Human).